A 237-amino-acid polypeptide reads, in one-letter code: Probable GTP-binding protein EngB (237 aa).

The region spanning 13 to 188 (TGYEIAFAGR…ASVMAGRLNY (176 aa)) is the EngB-type G domain. GTP is bound by residues 21 to 28 (GRSNAGKS), 48 to 52 (GRTQM), 67 to 70 (DLPG), 134 to 137 (TKAD), and 167 to 169 (FSS). 2 residues coordinate Mg(2+): S28 and T50. Residues 207 to 220 (DDLNDELMDQDETS) show a composition bias toward acidic residues. The interval 207–237 (DDLNDELMDQDETSEFNTENIDDHLDQEPKI) is disordered. Basic and acidic residues predominate over residues 227–237 (IDDHLDQEPKI).

The protein belongs to the TRAFAC class TrmE-Era-EngA-EngB-Septin-like GTPase superfamily. EngB GTPase family. It depends on Mg(2+) as a cofactor.

Functionally, necessary for normal cell division and for the maintenance of normal septation. This Acinetobacter baylyi (strain ATCC 33305 / BD413 / ADP1) protein is Probable GTP-binding protein EngB.